A 384-amino-acid chain; its full sequence is 1-deoxy-D-xylulose 5-phosphate reductoisomerase (384 aa).

Residues Thr11, Gly12, Ser13, Ile14, Lys38, and Asn123 each coordinate NADPH. 1-deoxy-D-xylulose 5-phosphate is bound at residue Lys124. Residue Glu125 participates in NADPH binding. Residue Asp148 participates in Mn(2+) binding. 4 residues coordinate 1-deoxy-D-xylulose 5-phosphate: Ser149, Glu150, Ser174, and His197. Glu150 is a Mn(2+) binding site. Gly203 serves as a coordination point for NADPH. Residues Ser210, Asn215, Lys216, and Glu219 each contribute to the 1-deoxy-D-xylulose 5-phosphate site. Mn(2+) is bound at residue Glu219.

It belongs to the DXR family. It depends on Mg(2+) as a cofactor. The cofactor is Mn(2+).

The catalysed reaction is 2-C-methyl-D-erythritol 4-phosphate + NADP(+) = 1-deoxy-D-xylulose 5-phosphate + NADPH + H(+). It functions in the pathway isoprenoid biosynthesis; isopentenyl diphosphate biosynthesis via DXP pathway; isopentenyl diphosphate from 1-deoxy-D-xylulose 5-phosphate: step 1/6. Functionally, catalyzes the NADPH-dependent rearrangement and reduction of 1-deoxy-D-xylulose-5-phosphate (DXP) to 2-C-methyl-D-erythritol 4-phosphate (MEP). This chain is 1-deoxy-D-xylulose 5-phosphate reductoisomerase, found in Halothermothrix orenii (strain H 168 / OCM 544 / DSM 9562).